Consider the following 462-residue polypeptide: Cytochrome b558/566 subunit A (462 aa).

Residues Met1–Lys8 lie on the Cytoplasmic side of the membrane. A helical transmembrane segment spans residues Ile9 to Leu26. At Glu27–Ser431 the chain is on the extracellular side. Asn28, Asn65, Asn91, Asn121, Asn144, Asn164, Asn174, Asn183, Asn211, Asn278, Asn279, Asn293, Asn316, Asn339, Asn353, and Asn376 each carry an N-linked (GlcNAc...) asparagine glycan. A helical membrane pass occupies residues Ser432–Leu456. The Cytoplasmic segment spans residues Tyr457 to Arg462.

Heme is required as a cofactor. N-glycosylated on at least seven Asn residues by identical hexasaccharide units composed of Man, GlcNAc, Glc and 6-deoxy-6-sulfoglucose residues in the molar ration of 2:2:1:1. In terms of processing, O-glycosylated on probably as many as 35 positions by single Man residues.

It is found in the cell membrane. In terms of biological role, monoheme cytochrome whose physiological function is not yet clear. This chain is Cytochrome b558/566 subunit A (cbsA), found in Sulfolobus acidocaldarius (strain ATCC 33909 / DSM 639 / JCM 8929 / NBRC 15157 / NCIMB 11770).